Reading from the N-terminus, the 462-residue chain is tRNA-2-methylthio-N(6)-dimethylallyladenosine synthase (462 aa).

The 117-residue stretch at 28 to 144 (KKLFVKTYGC…LPKMMEAVNA (117 aa)) folds into the MTTase N-terminal domain. 6 residues coordinate [4Fe-4S] cluster: cysteine 37, cysteine 73, cysteine 107, cysteine 181, cysteine 185, and cysteine 188. Positions 167–398 (ATRGPTAFLT…QALLTQQQRA (232 aa)) constitute a Radical SAM core domain. The region spanning 401–462 (DAMVGRRVKV…KTNSLTGRLV (62 aa)) is the TRAM domain.

Belongs to the methylthiotransferase family. MiaB subfamily. In terms of assembly, monomer. [4Fe-4S] cluster serves as cofactor.

The protein localises to the cytoplasm. It carries out the reaction N(6)-dimethylallyladenosine(37) in tRNA + (sulfur carrier)-SH + AH2 + 2 S-adenosyl-L-methionine = 2-methylsulfanyl-N(6)-dimethylallyladenosine(37) in tRNA + (sulfur carrier)-H + 5'-deoxyadenosine + L-methionine + A + S-adenosyl-L-homocysteine + 2 H(+). In terms of biological role, catalyzes the methylthiolation of N6-(dimethylallyl)adenosine (i(6)A), leading to the formation of 2-methylthio-N6-(dimethylallyl)adenosine (ms(2)i(6)A) at position 37 in tRNAs that read codons beginning with uridine. This Jannaschia sp. (strain CCS1) protein is tRNA-2-methylthio-N(6)-dimethylallyladenosine synthase.